The chain runs to 530 residues: Light-independent protochlorophyllide reductase subunit B (530 aa).

D36 contributes to the [4Fe-4S] cluster binding site. D290 acts as the Proton donor in catalysis. 425 to 426 (GL) contributes to the substrate binding site. The tract at residues 448 to 483 (LGHLGGHASETKTSSKGINQSPNNHSPAGESIHWTS) is disordered. Residues 458–473 (TKTSSKGINQSPNNHS) are compositionally biased toward polar residues.

Belongs to the ChlB/BchB/BchZ family. As to quaternary structure, protochlorophyllide reductase is composed of three subunits; ChlL, ChlN and ChlB. Forms a heterotetramer of two ChlB and two ChlN subunits. [4Fe-4S] cluster is required as a cofactor.

It catalyses the reaction chlorophyllide a + oxidized 2[4Fe-4S]-[ferredoxin] + 2 ADP + 2 phosphate = protochlorophyllide a + reduced 2[4Fe-4S]-[ferredoxin] + 2 ATP + 2 H2O. It functions in the pathway porphyrin-containing compound metabolism; chlorophyll biosynthesis (light-independent). In terms of biological role, component of the dark-operative protochlorophyllide reductase (DPOR) that uses Mg-ATP and reduced ferredoxin to reduce ring D of protochlorophyllide (Pchlide) to form chlorophyllide a (Chlide). This reaction is light-independent. The NB-protein (ChlN-ChlB) is the catalytic component of the complex. The chain is Light-independent protochlorophyllide reductase subunit B from Prochlorococcus marinus (strain SARG / CCMP1375 / SS120).